Reading from the N-terminus, the 517-residue chain is NADH-quinone oxidoreductase subunit N (517 aa).

Transmembrane regions (helical) follow at residues 14–34 (LAPT…EAFV), 40–60 (HMVQ…MVVV), 77–97 (GPAL…LLLI), 131–151 (ATEV…FVAA), 154–174 (LLTM…LCAL), 189–209 (YFLL…LVYG), 238–258 (VLLF…AAAA), 272–292 (PTPI…GALL), 306–326 (FTPI…VLAV), 334–354 (LLAY…LAPS), 362–382 (MFYL…VTLV), 404–424 (FYAG…LTSG), 451–471 (SMVL…SEPG), and 481–501 (GWLT…LGVV).

This sequence belongs to the complex I subunit 2 family. As to quaternary structure, NDH-1 is composed of 14 different subunits. Subunits NuoA, H, J, K, L, M, N constitute the membrane sector of the complex.

It is found in the cell membrane. The enzyme catalyses a quinone + NADH + 5 H(+)(in) = a quinol + NAD(+) + 4 H(+)(out). Its function is as follows. NDH-1 shuttles electrons from NADH, via FMN and iron-sulfur (Fe-S) centers, to quinones in the respiratory chain. The immediate electron acceptor for the enzyme in this species is believed to be a menaquinone. Couples the redox reaction to proton translocation (for every two electrons transferred, four hydrogen ions are translocated across the cytoplasmic membrane), and thus conserves the redox energy in a proton gradient. The chain is NADH-quinone oxidoreductase subunit N from Salinispora arenicola (strain CNS-205).